The sequence spans 144 residues: Bacilliredoxin BrxA (144 aa).

Residues Cys53 and Cys55 each act as nucleophile in the active site. At Cys53 the chain carries S-bacillithiol cysteine disulfide. The CXC active site motif motif lies at 53–55 (CGC). Residues Cys53 and Cys55 are joined by a disulfide bond.

It belongs to the bacilliredoxin family. N-terminal Cys of the CXC active site motif can react with bacillithiol (BSH) to form mixed disulfides. S-bacillithiolation protects Cys residues against overoxidation by acting as a redox switch in response to oxidative stress.

Functionally, S-bacillithiolation is the formation of mixed disulfide bonds between protein thiols and the general thiol reductant bacillithiol (BSH) under oxidative stress. BSH is an equivalent of glutathione (GSH) in Firmicutes. This protein is a dithiol bacilliredoxin, which debacillithiolates (removes BSH) the S-bacillithiolated OhrR (OhrR-SSB) in vitro and in vivo NaOCl-generated S-bacillithiolated MetE (MetE-SSB). Involved in maintaining redox homeostasis in response to disulfide stress conditions. Has a redox potential of -130 mV. Displays weak protein disulfide isomerase activity in vitro. This Bacillus subtilis (strain 168) protein is Bacilliredoxin BrxA.